We begin with the raw amino-acid sequence, 416 residues long: Tyrosine--tRNA ligase (416 aa).

Tyr-40 is a binding site for L-tyrosine. The 'HIGH' region motif lies at 45 to 54 (ATAASLHVGH). Tyr-177 and Gln-181 together coordinate L-tyrosine. The short motif at 237 to 241 (KMGKS) is the 'KMSKS' region element. Lys-240 contacts ATP. The region spanning 351-416 (LSVAHFLVAA…RKKHKLVRLS (66 aa)) is the S4 RNA-binding domain.

The protein belongs to the class-I aminoacyl-tRNA synthetase family. TyrS type 1 subfamily. In terms of assembly, homodimer.

Its subcellular location is the cytoplasm. It catalyses the reaction tRNA(Tyr) + L-tyrosine + ATP = L-tyrosyl-tRNA(Tyr) + AMP + diphosphate + H(+). Catalyzes the attachment of tyrosine to tRNA(Tyr) in a two-step reaction: tyrosine is first activated by ATP to form Tyr-AMP and then transferred to the acceptor end of tRNA(Tyr). In Cereibacter sphaeroides (strain ATCC 17029 / ATH 2.4.9) (Rhodobacter sphaeroides), this protein is Tyrosine--tRNA ligase.